A 77-amino-acid chain; its full sequence is Large ribosomal subunit protein bL28 (77 aa).

A disordered region spans residues 1-20; that stretch reads MSRVCQVTGKGPVTGNNISH.

It belongs to the bacterial ribosomal protein bL28 family.

The polypeptide is Large ribosomal subunit protein bL28 (Pseudomonas fluorescens (strain Pf0-1)).